Consider the following 94-residue polypeptide: UPF0235 protein TK0768 (94 aa).

The protein belongs to the UPF0235 family.

This is UPF0235 protein TK0768 from Thermococcus kodakarensis (strain ATCC BAA-918 / JCM 12380 / KOD1) (Pyrococcus kodakaraensis (strain KOD1)).